The primary structure comprises 139 residues: MIIGVGSDLIDIRRVAKVIERHGDRFLNRIFTDAERAKAARRANNEKMAVATYAKRFAAKEACSKALGTGIRHGVWWRDMGVVNMPSGRPSMILTGGALRRLQMLTPQGLEVRIDLSLTDDWPLAQAFVIISAVTPGNL.

The Mg(2+) site is built by D8 and E61.

It belongs to the P-Pant transferase superfamily. AcpS family. Requires Mg(2+) as cofactor.

The protein resides in the cytoplasm. It catalyses the reaction apo-[ACP] + CoA = holo-[ACP] + adenosine 3',5'-bisphosphate + H(+). Its function is as follows. Transfers the 4'-phosphopantetheine moiety from coenzyme A to a Ser of acyl-carrier-protein. The chain is Holo-[acyl-carrier-protein] synthase from Nitrobacter hamburgensis (strain DSM 10229 / NCIMB 13809 / X14).